We begin with the raw amino-acid sequence, 461 residues long: Phosphomethylpyrimidine synthase (461 aa).

Residues Asn81, Met110, Tyr140, His176, 196–198 (SRG), 237–240 (DSLR), and Glu276 contribute to the substrate site. His280 is a binding site for Zn(2+). Position 303 (Tyr303) interacts with substrate. His344 lines the Zn(2+) pocket. Positions 424, 427, and 432 each coordinate [4Fe-4S] cluster.

It belongs to the ThiC family. The cofactor is [4Fe-4S] cluster.

It catalyses the reaction 5-amino-1-(5-phospho-beta-D-ribosyl)imidazole + S-adenosyl-L-methionine = 4-amino-2-methyl-5-(phosphooxymethyl)pyrimidine + CO + 5'-deoxyadenosine + formate + L-methionine + 3 H(+). It participates in cofactor biosynthesis; thiamine diphosphate biosynthesis. Functionally, catalyzes the synthesis of the hydroxymethylpyrimidine phosphate (HMP-P) moiety of thiamine from aminoimidazole ribotide (AIR) in a radical S-adenosyl-L-methionine (SAM)-dependent reaction. The sequence is that of Phosphomethylpyrimidine synthase from Thermosynechococcus vestitus (strain NIES-2133 / IAM M-273 / BP-1).